A 340-amino-acid chain; its full sequence is Dihydroorotate dehydrogenase (quinone) (340 aa).

Residues 65 to 69 (AGADK) and Thr-89 each bind FMN. A substrate-binding site is contributed by Lys-69. Residue 114–118 (NRNGF) coordinates substrate. Residues Asn-142 and Asn-175 each coordinate FMN. Asn-175 is a binding site for substrate. The active-site Nucleophile is Ser-178. Asn-180 contributes to the substrate binding site. FMN is bound by residues Lys-220 and Thr-248. Residue 249-250 (NT) participates in substrate binding. Residues Gly-271, Gly-300, and 321-322 (YS) contribute to the FMN site.

Belongs to the dihydroorotate dehydrogenase family. Type 2 subfamily. As to quaternary structure, monomer. Requires FMN as cofactor.

Its subcellular location is the cell membrane. It catalyses the reaction (S)-dihydroorotate + a quinone = orotate + a quinol. Its pathway is pyrimidine metabolism; UMP biosynthesis via de novo pathway; orotate from (S)-dihydroorotate (quinone route): step 1/1. In terms of biological role, catalyzes the conversion of dihydroorotate to orotate with quinone as electron acceptor. In Mannheimia succiniciproducens (strain KCTC 0769BP / MBEL55E), this protein is Dihydroorotate dehydrogenase (quinone).